The following is a 555-amino-acid chain: ATP-dependent RNA helicase MRH4, mitochondrial (555 aa).

The transit peptide at 1–25 directs the protein to the mitochondrion; sequence MFKLLIPNKYNYVIRPLVRFKSIKS. Residues 101–108 carry the Q motif motif; that stretch reads DIKPTPVQ. The Helicase ATP-binding domain maps to 144–361; sequence ANEIQKTKVF…SKLFPDQRSL (218 aa). Position 157–164 (157–164) interacts with ATP; the sequence is AETGSGKT. Residues 309-312 carry the DEAD box motif; that stretch reads DEAD. Residues 395–555 form the Helicase C-terminal domain; that stretch reads CLAQALYAIS…NAIIRGLRIG (161 aa).

Belongs to the DEAD box helicase family. MRH4 subfamily.

The protein resides in the mitochondrion. It carries out the reaction ATP + H2O = ADP + phosphate + H(+). Functionally, ATP-binding RNA helicase involved in mitochondrial RNA metabolism. Required for maintenance of mitochondrial DNA. The sequence is that of ATP-dependent RNA helicase MRH4, mitochondrial (MRH4) from Candida albicans (strain SC5314 / ATCC MYA-2876) (Yeast).